A 213-amino-acid polypeptide reads, in one-letter code: Phospho-2-dehydro-3-deoxyheptonate aldolase, Tyr-sensitive (213 aa).

This sequence belongs to the class-I DAHP synthase family.

The catalysed reaction is D-erythrose 4-phosphate + phosphoenolpyruvate + H2O = 7-phospho-2-dehydro-3-deoxy-D-arabino-heptonate + phosphate. The protein operates within metabolic intermediate biosynthesis; chorismate biosynthesis; chorismate from D-erythrose 4-phosphate and phosphoenolpyruvate: step 1/7. Stereospecific condensation of phosphoenolpyruvate (PEP) and D-erythrose-4-phosphate (E4P) giving rise to 3-deoxy-D-arabino-heptulosonate-7-phosphate (DAHP). The chain is Phospho-2-dehydro-3-deoxyheptonate aldolase, Tyr-sensitive (aroF) from Enterobacter agglomerans (Erwinia herbicola).